The sequence spans 305 residues: Ribonuclease BN (305 aa).

Zn(2+)-binding residues include His64, His66, Asp68, His69, His141, Asp212, and His270. Asp68 acts as the Proton acceptor in catalysis.

It belongs to the RNase Z family. RNase BN subfamily. In terms of assembly, homodimer. It depends on Zn(2+) as a cofactor.

Functionally, zinc phosphodiesterase, which has both exoribonuclease and endoribonuclease activities. The chain is Ribonuclease BN from Escherichia coli O17:K52:H18 (strain UMN026 / ExPEC).